An 82-amino-acid chain; its full sequence is uncharacterized protein (82 aa).

This is an uncharacterized protein from Escherichia coli (strain K12).